A 463-amino-acid polypeptide reads, in one-letter code: Peptidase inhibitor 16 (463 aa).

Positions 1–27 are cleaved as a signal peptide; sequence MHGSCSFLMLLLPLLLLLVATTGPVGA. The 129-residue stretch at 37-165 folds into the SCP domain; that stretch reads VELHNLYRAQ…TNIELLVCNY (129 aa). Asn114 carries an N-linked (GlcNAc...) asparagine glycan. Disordered regions lie at residues 262 to 281, 303 to 341, and 383 to 408; these read TQAPTSLATKDPPSMATEAP, EPVTFPKSTHVPIPKSADKVTDKTKVPSRSPENSLDPKM, and LQATLDHTGHTSSKSLPNFPNTSATA. Positions 318–327 are enriched in basic and acidic residues; that stretch reads SADKVTDKTK. Positions 386–395 are O-glycosylated at one site; that stretch reads TLDHTGHTSS. A compositionally biased stretch (polar residues) spans 392–408; the sequence is HTSSKSLPNFPNTSATA. 2 N-linked (GlcNAc...) asparagine glycosylation sites follow: Asn403 and Asn409.

Belongs to the CRISP family. Interacts with PSP94/MSMB. N- and O-glycosylated. O-glycosylated with core 1 or possibly core 8 glycans. Expressed in prostate, testis, ovary and intestine. Concentrates in prostate cancer patient's sera.

The protein localises to the secreted. Its function is as follows. May inhibit cardiomyocyte growth. In Homo sapiens (Human), this protein is Peptidase inhibitor 16 (PI16).